Here is a 947-residue protein sequence, read N- to C-terminus: MQIDMNKLTPMMKQYLEVKNRYKDCILFFRLGDFYEMFFEDALVASKALEIALTGKACGLEERAPMCGVPFHSANSYISKLVENGYKVAIGEQMEDPSTAKGIVRREVIRVITPGTVLDGNLLENKKNNYLLSLYKDGTNIGLTYVDISTGETNATCLNEDKVIEEIAKIHPTEIIINDLDFIEKLRDIATVSNIYINESFSDNYLDINILKEYFPDVYLQKLKFDDKGLIKSSLSILLNYIYNTQKQITSNINNINIYNSSEYMVLDMFTRTNLELTQTIRGNKKKGSLLHVLDKTSTAMGGRLLRKYVEEPLINKSKIENRLDVIEEIKDDFILREDLNDILKNIYDIERICGKIAFERVTPKELIHLKNSIEKLPNLKDTINLSNAKILKEYVSEMDKLDDIYNLIDEAILEEPTITIKDGNIIKSDFSDELKELREISKNGAFLVKEIENREREKTGVKSLKIGFNKVFGYYIEITKANFKQAKLDETYIRKQTLSNAERYITPELKEIEEKILHAEEKIKSLEYEIFVEIRDTIYKNIDRIQKVAKTIANIDVFVSLATVAHINNYVKPAINENNKLDIRNGRHPVVENIVGEENFVPNDTYLNRGENIINIITGPNMSGKSTYMRQTAIIALMAHIGSFVPAESADIPILDRIFTRVGASDDLSQGQSTFMVEMNEVSLILKNATERSLVILDEIGRGTSTYDGISLAWSIVEYIQKNIRCKTLFATHYHELTDLEEEFKEVKNYSIAVKEDGEGIIFLRKIIPQGADKSYGIYVAKLAKLPDEVIERAKYILKDLEKNHVYNSVAINGDKENNNIINSNLDEELVKVNQSNFKNKYESLKIEHELIVKDYKHIKKDYDKLNSKFKALNDEVALMKQNDDKEKINQEDSVKEVALTQISFDSVNRDILSEEILNLDILNMTPLDAINSLYNLQRKAKEIKS.

620 to 627 (GPNMSGKS) provides a ligand contact to ATP.

The protein belongs to the DNA mismatch repair MutS family.

Its function is as follows. This protein is involved in the repair of mismatches in DNA. It is possible that it carries out the mismatch recognition step. This protein has a weak ATPase activity. The polypeptide is DNA mismatch repair protein MutS (Clostridioides difficile (strain 630) (Peptoclostridium difficile)).